The following is a 512-amino-acid chain: ETS translocation variant 3 (512 aa).

Positions 35 to 116 (IQLWHFILEL…KGKRFTYKFN (82 aa)) form a DNA-binding region, ETS. Positions 136 to 222 (VPQSAPPVPT…NAIGGGGIGH (87 aa)) are disordered. Ser139, Ser159, and Ser315 each carry phosphoserine. The segment covering 158-184 (HSPTNDVQPGRFSASSLTASGQESSNG) has biased composition (polar residues). The interval 336-512 (PEESTQFSIK…QGLATAAADA (177 aa)) is disordered. Basic and acidic residues-rich tracts occupy residues 380-406 (IKVE…HTQE), 453-468 (DRPG…KEDA), and 479-491 (RWND…ELSK). Residue Lys381 forms a Glycyl lysine isopeptide (Lys-Gly) (interchain with G-Cter in SUMO2) linkage. Lys388 is subject to N6-acetyllysine; alternate. Lys388 participates in a covalent cross-link: Glycyl lysine isopeptide (Lys-Gly) (interchain with G-Cter in SUMO2); alternate.

The protein belongs to the ETS family.

The protein localises to the nucleus. Transcriptional repressor that contribute to growth arrest during terminal macrophage differentiation by repressing target genes involved in Ras-dependent proliferation. Represses MMP1 promoter activity. The polypeptide is ETS translocation variant 3 (ETV3) (Homo sapiens (Human)).